The following is a 356-amino-acid chain: Deoxyribonuclease-2-beta (356 aa).

The first 22 residues, 1 to 22 (MTAQPLKAALPLLFVALSGVLG), serve as a signal peptide directing secretion. N-linked (GlcNAc...) asparagine glycans are attached at residues Asn77, Asn98, Asn114, and Asn273.

This sequence belongs to the DNase II family. As to expression, liver specific.

Its subcellular location is the lysosome. It catalyses the reaction Endonucleolytic cleavage to nucleoside 3'-phosphates and 3'-phosphooligonucleotide end-products.. Functionally, hydrolyzes DNA under acidic conditions. Does not require divalent cations for activity. Participates in the degradation of nuclear DNA during lens cell differentiation. The chain is Deoxyribonuclease-2-beta (Dnase2b) from Rattus norvegicus (Rat).